Reading from the N-terminus, the 450-residue chain is Phosphoglucosamine mutase 2 (450 aa).

Ser101 functions as the Phosphoserine intermediate in the catalytic mechanism. Positions 101, 245, 247, and 249 each coordinate Mg(2+). The residue at position 101 (Ser101) is a Phosphoserine.

This sequence belongs to the phosphohexose mutase family. Mg(2+) is required as a cofactor. Post-translationally, activated by phosphorylation.

It catalyses the reaction alpha-D-glucosamine 1-phosphate = D-glucosamine 6-phosphate. Functionally, catalyzes the conversion of glucosamine-6-phosphate to glucosamine-1-phosphate. The sequence is that of Phosphoglucosamine mutase 2 from Shewanella sp. (strain MR-4).